We begin with the raw amino-acid sequence, 239 residues long: MTVEWLAEQLKEHNIQLTETQKQQFQTYYRLLVEWNEKMNLTSITDEHDVYLKHFYDSIAPSFYFDFNQPISICDVGAGAGFPSIPLKIMFPQLKVTIVDSLNKRIQFLNHLASELQLQDVSFIHDRAETFGKGVYRESYDVVTARAVARLSVLSELCLPLVKKGGQFVALKSSKGEEELEEAKFAISVLGGNVTETHTFELPEDAGERQMFIIDKKRQTPKKYPRKPGTPNKTPLLEK.

S-adenosyl-L-methionine contacts are provided by residues glycine 77, phenylalanine 82, 128–129, and arginine 146; that span reads AE. The disordered stretch occupies residues 215 to 239; the sequence is DKKRQTPKKYPRKPGTPNKTPLLEK.

This sequence belongs to the methyltransferase superfamily. RNA methyltransferase RsmG family.

It is found in the cytoplasm. Specifically methylates the N7 position of guanine in position 535 of 16S rRNA. The sequence is that of Ribosomal RNA small subunit methyltransferase G from Staphylococcus aureus (strain USA300).